We begin with the raw amino-acid sequence, 158 residues long: Transcriptional repressor NrdR (158 aa).

Residues 3–34 (CPSCQNTDSRVLESRAADAGRSVRRRRECLHC) fold into a zinc finger. Positions 49-139 (ITVLKRNGNR…VYRDFRGVND (91 aa)) constitute an ATP-cone domain.

This sequence belongs to the NrdR family. Requires Zn(2+) as cofactor.

In terms of biological role, negatively regulates transcription of bacterial ribonucleotide reductase nrd genes and operons by binding to NrdR-boxes. The protein is Transcriptional repressor NrdR of Prochlorococcus marinus (strain MIT 9313).